Reading from the N-terminus, the 259-residue chain is Thiazole synthase (259 aa).

The active-site Schiff-base intermediate with DXP is K95. Residues G156, A182–G183, and N204–T205 each bind 1-deoxy-D-xylulose 5-phosphate.

Belongs to the ThiG family. Homotetramer. Forms heterodimers with either ThiH or ThiS.

The protein resides in the cytoplasm. It catalyses the reaction [ThiS sulfur-carrier protein]-C-terminal-Gly-aminoethanethioate + 2-iminoacetate + 1-deoxy-D-xylulose 5-phosphate = [ThiS sulfur-carrier protein]-C-terminal Gly-Gly + 2-[(2R,5Z)-2-carboxy-4-methylthiazol-5(2H)-ylidene]ethyl phosphate + 2 H2O + H(+). It participates in cofactor biosynthesis; thiamine diphosphate biosynthesis. Its function is as follows. Catalyzes the rearrangement of 1-deoxy-D-xylulose 5-phosphate (DXP) to produce the thiazole phosphate moiety of thiamine. Sulfur is provided by the thiocarboxylate moiety of the carrier protein ThiS. In vitro, sulfur can be provided by H(2)S. The polypeptide is Thiazole synthase (Baumannia cicadellinicola subsp. Homalodisca coagulata).